The sequence spans 238 residues: MSHCGAPSVPEPEKKVPWQYFTSALWQYNVALVQMLALCPTLAVTTTATNGLGMGLATTLVLVMTNALISSMRHTISPEVRNPVMIGVIAGVVTLTDMAMNAWMHELYKVLGLFIALIVTNCAVLGRAESFCLRNPVIPSILDGAGMGAGFTAVLVVIGGIREILGSGTLFSQASSLLGSHFKWMEITVIPDFQGILLAILPPGAFIVLGFLLAAKRVIDRKRAERRQQTHGELVVLQ.

Helical transmembrane passes span 24-44, 52-72, 84-104, 106-126, 141-161, and 195-215; these read ALWQ…TLAV, LGMG…ISSM, VMIG…NAWM, ELYK…AVLG, ILDG…IGGI, and GILL…LLAA.

Belongs to the NqrDE/RnfAE family. As to quaternary structure, the complex is composed of six subunits: RnfA, RnfB, RnfC, RnfD, RnfE and RnfG.

It is found in the cell inner membrane. Its function is as follows. Part of a membrane-bound complex that couples electron transfer with translocation of ions across the membrane. This is Ion-translocating oxidoreductase complex subunit E from Azotobacter vinelandii (strain DJ / ATCC BAA-1303).